The chain runs to 95 residues: UPF0473 protein BPUM_2377 (95 aa).

Belongs to the UPF0473 family.

The protein is UPF0473 protein BPUM_2377 of Bacillus pumilus (strain SAFR-032).